The sequence spans 439 residues: Protein ABHD8 (439 aa).

Disordered stretches follow at residues 54–75 (HAGP…PGVK) and 122–148 (ELAE…RPKR). Positions 58–67 (APIPTPPPPP) are enriched in pro residues. The segment covering 138-148 (GRRRRPRRPKR) has biased composition (basic residues). Residues 169 to 271 (VLFFIHGVGG…HKVIMINGGG (103 aa)) enclose the AB hydrolase-1 domain. Active-site charge relay system residues include Ser244, Asp362, and His390. Positions 415–439 (EAEPKLEPKPKPQLLQPEPAPGEEK) are disordered.

This sequence belongs to the AB hydrolase superfamily. As to quaternary structure, interacts with NLRP3 (via NACHT and LLR domains); this interaction is enhanced in the presence of NLRP3 inflammasome inducers, such as ATP, nigericin, silica, or alum. Interacts with ZDHHC12.

The protein localises to the cytoplasm. Its function is as follows. Negatively regulates NLRP3-driven inflammation. Promotes NLRP3 degradation through the chaperone-mediated autophagy (CMA) pathway, hence attenuating inflammasome activation and IL1B secretion. Acts by recruiting palmitoyltransferase ZDHHC12 to NLRP3, facilitating NLRP3 palmitoylation and subsequent degradation. The sequence is that of Protein ABHD8 from Mus musculus (Mouse).